We begin with the raw amino-acid sequence, 130 residues long: Riboflavin kinase (130 aa).

Residue 10–15 (GFGEGK) participates in CDP binding. The Mg(2+) site is built by Thr39 and Asn41. Positions 96 and 104 each coordinate FMN. 109-112 (VNLR) serves as a coordination point for CDP.

The protein belongs to the archaeal riboflavin kinase family. Mg(2+) serves as cofactor.

The catalysed reaction is riboflavin + CTP = CDP + FMN + H(+). It functions in the pathway cofactor biosynthesis; FMN biosynthesis; FMN from riboflavin (CTP route): step 1/1. Functionally, catalyzes the CTP-dependent phosphorylation of riboflavin (vitamin B2) to form flavin mononucleotide (FMN). In Methanococcus vannielii (strain ATCC 35089 / DSM 1224 / JCM 13029 / OCM 148 / SB), this protein is Riboflavin kinase.